A 204-amino-acid polypeptide reads, in one-letter code: Adenylyl-sulfate kinase (204 aa).

34-41 (GLSGSGKS) is a binding site for ATP. The Phosphoserine intermediate role is filled by Ser108.

Belongs to the APS kinase family.

It catalyses the reaction adenosine 5'-phosphosulfate + ATP = 3'-phosphoadenylyl sulfate + ADP + H(+). Its pathway is sulfur metabolism; hydrogen sulfide biosynthesis; sulfite from sulfate: step 2/3. In terms of biological role, catalyzes the synthesis of activated sulfate. The sequence is that of Adenylyl-sulfate kinase from Phocaeicola vulgatus (strain ATCC 8482 / DSM 1447 / JCM 5826 / CCUG 4940 / NBRC 14291 / NCTC 11154) (Bacteroides vulgatus).